We begin with the raw amino-acid sequence, 380 residues long: tRNA-specific 2-thiouridylase MnmA (380 aa).

ATP-binding positions include 9–16 (GVSGGVDS) and Met-35. The tract at residues 94–96 (NPD) is interaction with target base in tRNA. The active-site Nucleophile is Cys-99. Cys-99 and Cys-195 are oxidised to a cystine. Gly-123 contributes to the ATP binding site. The interaction with tRNA stretch occupies residues 145-147 (KDQ). The active-site Cysteine persulfide intermediate is the Cys-195. Positions 308-309 (RY) are interaction with tRNA.

The protein belongs to the MnmA/TRMU family.

Its subcellular location is the cytoplasm. It carries out the reaction S-sulfanyl-L-cysteinyl-[protein] + uridine(34) in tRNA + AH2 + ATP = 2-thiouridine(34) in tRNA + L-cysteinyl-[protein] + A + AMP + diphosphate + H(+). Its function is as follows. Catalyzes the 2-thiolation of uridine at the wobble position (U34) of tRNA, leading to the formation of s(2)U34. This is tRNA-specific 2-thiouridylase MnmA from Stenotrophomonas maltophilia (strain R551-3).